Here is a 315-residue protein sequence, read N- to C-terminus: Homoserine kinase (315 aa).

97–107 (PPARGLGSSAT) is a binding site for ATP.

This sequence belongs to the GHMP kinase family. Homoserine kinase subfamily.

Its subcellular location is the cytoplasm. The enzyme catalyses L-homoserine + ATP = O-phospho-L-homoserine + ADP + H(+). Its pathway is amino-acid biosynthesis; L-threonine biosynthesis; L-threonine from L-aspartate: step 4/5. In terms of biological role, catalyzes the ATP-dependent phosphorylation of L-homoserine to L-homoserine phosphate. This Synechococcus sp. (strain WH7803) protein is Homoserine kinase.